The sequence spans 360 residues: Glutamate--cysteine ligase (360 aa).

Belongs to the glutamate--cysteine ligase type 2 family. YbdK subfamily.

It carries out the reaction L-cysteine + L-glutamate + ATP = gamma-L-glutamyl-L-cysteine + ADP + phosphate + H(+). Its function is as follows. Catalyzes the synthesis of gamma-glutamylcysteine (gamma-GC), the main low-molecular-weight thiol compound instead of glutathione in halophilic archaea. In Halobacterium salinarum (strain ATCC 29341 / DSM 671 / R1), this protein is Glutamate--cysteine ligase.